We begin with the raw amino-acid sequence, 125 residues long: Large ribosomal subunit protein bL21 (125 aa).

The protein belongs to the bacterial ribosomal protein bL21 family. In terms of assembly, part of the 50S ribosomal subunit. Contacts protein L20.

Functionally, this protein binds to 23S rRNA in the presence of protein L20. This chain is Large ribosomal subunit protein bL21, found in Synechococcus sp. (strain CC9311).